The following is a 273-amino-acid chain: Dermonecrotic toxin LhSicTox-alphaIA2bvi (273 aa).

Residue His5 is part of the active site. The Mg(2+) site is built by Glu25 and Asp27. The Nucleophile role is filled by His41. 2 cysteine pairs are disulfide-bonded: Cys45–Cys51 and Cys47–Cys190. Asp85 serves as a coordination point for Mg(2+).

This sequence belongs to the arthropod phospholipase D family. Class II subfamily. The cofactor is Mg(2+). As to expression, expressed by the venom gland.

It localises to the secreted. The enzyme catalyses an N-(acyl)-sphingosylphosphocholine = an N-(acyl)-sphingosyl-1,3-cyclic phosphate + choline. It catalyses the reaction an N-(acyl)-sphingosylphosphoethanolamine = an N-(acyl)-sphingosyl-1,3-cyclic phosphate + ethanolamine. The catalysed reaction is a 1-acyl-sn-glycero-3-phosphocholine = a 1-acyl-sn-glycero-2,3-cyclic phosphate + choline. It carries out the reaction a 1-acyl-sn-glycero-3-phosphoethanolamine = a 1-acyl-sn-glycero-2,3-cyclic phosphate + ethanolamine. In terms of biological role, dermonecrotic toxins cleave the phosphodiester linkage between the phosphate and headgroup of certain phospholipids (sphingolipid and lysolipid substrates), forming an alcohol (often choline) and a cyclic phosphate. This toxin acts on sphingomyelin (SM). It may also act on ceramide phosphoethanolamine (CPE), lysophosphatidylcholine (LPC) and lysophosphatidylethanolamine (LPE), but not on lysophosphatidylserine (LPS), and lysophosphatidylglycerol (LPG). It acts by transphosphatidylation, releasing exclusively cyclic phosphate products as second products. Induces dermonecrosis, hemolysis, increased vascular permeability, edema, inflammatory response, and platelet aggregation. The protein is Dermonecrotic toxin LhSicTox-alphaIA2bvi of Loxosceles hirsuta (Recluse spider).